Reading from the N-terminus, the 128-residue chain is uncharacterized protein (128 aa).

The interval 25-61 is disordered; it reads LPNRLPEGSTVGPKPDSSWEAGSQGNWGLTSSGAGQD. Positions 44 to 61 are enriched in polar residues; it reads EAGSQGNWGLTSSGAGQD.

This is an uncharacterized protein from Homo sapiens (Human).